The following is a 239-amino-acid chain: Tumor necrosis factor ligand superfamily member 8 (239 aa).

The tract at residues 1 to 36 is disordered; sequence MEPGLQQAGSCGAPSPDPAMQVQPGSVASPWRSTRP. At 1–43 the chain is on the cytoplasmic side; that stretch reads MEPGLQQAGSCGAPSPDPAMQVQPGSVASPWRSTRPWRSTSRS. A helical; Signal-anchor for type II membrane protein membrane pass occupies residues 44–67; it reads YFYLSTTALVCLVVAVAIILVLVV. Residues 68–239 are Extracellular-facing; it reads QKKDSTPNTT…LSVFLYSSSD (172 aa). N-linked (GlcNAc...) asparagine glycans are attached at residues Asn75, Asn86, Asn114, Asn158, Asn194, and Asn206. Positions 103–230 constitute a THD domain; it reads SWAYLQVSKH…TNTFPLDNVL (128 aa). Cys156 and Cys182 are disulfide-bonded.

This sequence belongs to the tumor necrosis factor family. Homotrimer.

It is found in the membrane. Cytokine that binds to TNFRSF8/CD30. Induces proliferation of T-cells. The protein is Tumor necrosis factor ligand superfamily member 8 (Tnfsf8) of Mus musculus (Mouse).